A 263-amino-acid polypeptide reads, in one-letter code: Probable esterase PIR7A (263 aa).

Catalysis depends on S82, which acts as the Acyl-ester intermediate. Active-site charge relay system residues include D213 and H241.

It belongs to the AB hydrolase superfamily.

This chain is Probable esterase PIR7A (PIR7A), found in Oryza sativa subsp. indica (Rice).